The chain runs to 338 residues: Fructose-1,6-bisphosphatase 1 (338 aa).

Residue Thr2 is modified to N-acetylthreonine. Residues 18–22 and 28–32 each bind AMP; these read VMEEG and TGEMT. Residues Asp69 and Glu98 each contribute to the Mg(2+) site. An AMP-binding site is contributed by 113–114; that stretch reads KY. Mg(2+) contacts are provided by Asp119, Leu121, and Asp122. 122 to 125 provides a ligand contact to substrate; it reads DGSS. Residue Arg141 coordinates AMP. Lys151 is modified (N6-succinyllysine). The residue at position 208 (Ser208) is a Phosphoserine; by PKA. Residues 213-216, 244-249, Tyr265, and 275-277 contribute to the substrate site; these read NEGY, RYVGSM, and KLR. A phosphotyrosine mark is found at Tyr216, Tyr245, and Tyr265. Glu281 provides a ligand contact to Mg(2+).

Belongs to the FBPase class 1 family. Homotetramer. Mg(2+) serves as cofactor.

It carries out the reaction beta-D-fructose 1,6-bisphosphate + H2O = beta-D-fructose 6-phosphate + phosphate. The protein operates within carbohydrate biosynthesis; gluconeogenesis. Its activity is regulated as follows. Subject to complex allosteric regulation. The enzyme can assume an active R-state, or an inactive T-state. Intermediate conformations may exist. AMP acts as an allosteric inhibitor. AMP binding affects the turnover of bound substrate and not the affinity for substrate. Fructose 2,6-bisphosphate acts as a competitive inhibitor. Fructose 2,6-bisphosphate and AMP have synergistic effects. Catalyzes the hydrolysis of fructose 1,6-bisphosphate to fructose 6-phosphate in the presence of divalent cations, acting as a rate-limiting enzyme in gluconeogenesis. Plays a role in regulating glucose sensing and insulin secretion of pancreatic beta-cells. Appears to modulate glycerol gluconeogenesis in liver. Important regulator of appetite and adiposity; increased expression of the protein in liver after nutrient excess increases circulating satiety hormones and reduces appetite-stimulating neuropeptides and thus seems to provide a feedback mechanism to limit weight gain. This is Fructose-1,6-bisphosphatase 1 (FBP1) from Sus scrofa (Pig).